The chain runs to 423 residues: Adenylosuccinate synthetase (423 aa).

GTP is bound by residues 12–18 (GDEGKGK) and 40–42 (GHT). D13 serves as the catalytic Proton acceptor. The Mg(2+) site is built by D13 and G40. Residues 13-16 (DEGK), 38-41 (NAGH), T129, R143, Q224, T239, and R303 each bind IMP. H41 (proton donor) is an active-site residue. 299 to 305 (SVTGRQR) serves as a coordination point for substrate. Residues R305, 331-333 (KGD), and 412-414 (SVG) each bind GTP.

The protein belongs to the adenylosuccinate synthetase family. Homodimer. The cofactor is Mg(2+).

The protein resides in the cytoplasm. The catalysed reaction is IMP + L-aspartate + GTP = N(6)-(1,2-dicarboxyethyl)-AMP + GDP + phosphate + 2 H(+). It participates in purine metabolism; AMP biosynthesis via de novo pathway; AMP from IMP: step 1/2. In terms of biological role, plays an important role in the de novo pathway of purine nucleotide biosynthesis. Catalyzes the first committed step in the biosynthesis of AMP from IMP. The protein is Adenylosuccinate synthetase of Flavobacterium johnsoniae (strain ATCC 17061 / DSM 2064 / JCM 8514 / BCRC 14874 / CCUG 350202 / NBRC 14942 / NCIMB 11054 / UW101) (Cytophaga johnsonae).